The following is a 99-amino-acid chain: Nucleoid-associated protein SSA_0326 (99 aa).

Residues 1 to 15 (MMNMQSMMKQAQKLQ) are compositionally biased toward low complexity. Positions 1 to 23 (MMNMQSMMKQAQKLQKQMEKGQA) are disordered.

Belongs to the YbaB/EbfC family. Homodimer.

The protein resides in the cytoplasm. Its subcellular location is the nucleoid. In terms of biological role, binds to DNA and alters its conformation. May be involved in regulation of gene expression, nucleoid organization and DNA protection. The polypeptide is Nucleoid-associated protein SSA_0326 (Streptococcus sanguinis (strain SK36)).